Reading from the N-terminus, the 501-residue chain is Rhazimal synthase (501 aa).

A helical transmembrane segment spans residues 4-24; that stretch reads MQLSFASAVVYSLIFFVFLLV. The N-linked (GlcNAc...) asparagine glycan is linked to Asn-282. Cys-442 contacts heme.

Belongs to the cytochrome P450 family. Heme serves as cofactor.

It is found in the membrane. It catalyses the reaction (19E)-geissoschizine + reduced [NADPH--hemoprotein reductase] + O2 = rhazimal + oxidized [NADPH--hemoprotein reductase] + 2 H2O + H(+). The catalysed reaction is (19E)-geissoschizine + reduced [NADPH--hemoprotein reductase] + O2 = akuammicine + formate + oxidized [NADPH--hemoprotein reductase] + H2O + H(+). It functions in the pathway alkaloid biosynthesis. Functionally, a cytochrome P450 monooxygenase involved in the biosynthesis of akuammilan monoterpene indole alkaloids (MIAs) natural products, components with various biological properties such as antidiabetic, antibacterial, anti-inflammatory, anticancer, and antimalarial activities. Catalyzes the conversion of geissoschizine to rhazimal. Can also, with lower efficiency, support the conversion of geissoschizine to akuammicine. The sequence is that of Rhazimal synthase from Alstonia scholaris (Dogbane).